A 142-amino-acid chain; its full sequence is Protein archease (142 aa).

Ca(2+)-binding residues include Asp12, Asp141, and Ile142.

This sequence belongs to the archease family.

Activates the tRNA-splicing ligase complex by facilitating the enzymatic turnover of catalytic subunit RtcB. Acts by promoting the guanylylation of RtcB, a key intermediate step in tRNA ligation. Can also alter the NTP specificity of RtcB such that ATP, dGTP or ITP is used efficiently. This is Protein archease from Pyrococcus furiosus (strain ATCC 43587 / DSM 3638 / JCM 8422 / Vc1).